The primary structure comprises 181 residues: Large ribosomal subunit protein bL19 (181 aa).

The span at 162–173 (EKKAAAEAEAAK) shows a compositional bias: basic and acidic residues. Positions 162–181 (EKKAAAEAEAAKAAEATPAE) are disordered.

Belongs to the bacterial ribosomal protein bL19 family.

Functionally, this protein is located at the 30S-50S ribosomal subunit interface and may play a role in the structure and function of the aminoacyl-tRNA binding site. This chain is Large ribosomal subunit protein bL19, found in Mesorhizobium japonicum (strain LMG 29417 / CECT 9101 / MAFF 303099) (Mesorhizobium loti (strain MAFF 303099)).